Reading from the N-terminus, the 201-residue chain is Imidazole glycerol phosphate synthase subunit HisH (201 aa).

Residues 1–201 enclose the Glutamine amidotransferase type-1 domain; it reads MVFIADYGAG…LQVLRNFAEC (201 aa). The active-site Nucleophile is the C79. Active-site residues include H183 and E185.

Heterodimer of HisH and HisF.

It is found in the cytoplasm. The catalysed reaction is 5-[(5-phospho-1-deoxy-D-ribulos-1-ylimino)methylamino]-1-(5-phospho-beta-D-ribosyl)imidazole-4-carboxamide + L-glutamine = D-erythro-1-(imidazol-4-yl)glycerol 3-phosphate + 5-amino-1-(5-phospho-beta-D-ribosyl)imidazole-4-carboxamide + L-glutamate + H(+). It carries out the reaction L-glutamine + H2O = L-glutamate + NH4(+). It participates in amino-acid biosynthesis; L-histidine biosynthesis; L-histidine from 5-phospho-alpha-D-ribose 1-diphosphate: step 5/9. Its function is as follows. IGPS catalyzes the conversion of PRFAR and glutamine to IGP, AICAR and glutamate. The HisH subunit catalyzes the hydrolysis of glutamine to glutamate and ammonia as part of the synthesis of IGP and AICAR. The resulting ammonia molecule is channeled to the active site of HisF. This Chlorobium luteolum (strain DSM 273 / BCRC 81028 / 2530) (Pelodictyon luteolum) protein is Imidazole glycerol phosphate synthase subunit HisH.